Reading from the N-terminus, the 198-residue chain is Small ribosomal subunit protein uS7 (198 aa).

The protein belongs to the universal ribosomal protein uS7 family. Part of the 30S ribosomal subunit.

Functionally, one of the primary rRNA binding proteins, it binds directly to 16S rRNA where it nucleates assembly of the head domain of the 30S subunit. Is located at the subunit interface close to the decoding center. This is Small ribosomal subunit protein uS7 from Desulfurococcus amylolyticus (strain DSM 18924 / JCM 16383 / VKM B-2413 / 1221n) (Desulfurococcus kamchatkensis).